The following is a 356-amino-acid chain: Phenylalanine--tRNA ligase alpha subunit (356 aa).

Mg(2+) is bound at residue E258.

It belongs to the class-II aminoacyl-tRNA synthetase family. Phe-tRNA synthetase alpha subunit type 1 subfamily. In terms of assembly, tetramer of two alpha and two beta subunits. Requires Mg(2+) as cofactor.

It localises to the cytoplasm. It carries out the reaction tRNA(Phe) + L-phenylalanine + ATP = L-phenylalanyl-tRNA(Phe) + AMP + diphosphate + H(+). The chain is Phenylalanine--tRNA ligase alpha subunit from Macrococcus caseolyticus (strain JCSC5402) (Macrococcoides caseolyticum).